We begin with the raw amino-acid sequence, 371 residues long: Carbamoyl phosphate synthase small chain (371 aa).

Residues 1 to 190 are CPSase; it reads MRKTAILALE…LYRENEKPLV (190 aa). 3 residues coordinate L-glutamine: Ser47, Gly237, and Gly239. One can recognise a Glutamine amidotransferase type-1 domain in the interval 189–371; the sequence is LVAVIDFGVK…FKEFVKMAQG (183 aa). Catalysis depends on Cys264, which acts as the Nucleophile. L-glutamine-binding residues include Leu265, Gln268, Asn306, and Phe309. Residues His348 and Glu350 contribute to the active site.

Belongs to the CarA family. Composed of two chains; the small (or glutamine) chain promotes the hydrolysis of glutamine to ammonia, which is used by the large (or ammonia) chain to synthesize carbamoyl phosphate. Tetramer of heterodimers (alpha,beta)4.

It catalyses the reaction hydrogencarbonate + L-glutamine + 2 ATP + H2O = carbamoyl phosphate + L-glutamate + 2 ADP + phosphate + 2 H(+). The catalysed reaction is L-glutamine + H2O = L-glutamate + NH4(+). It functions in the pathway amino-acid biosynthesis; L-arginine biosynthesis; carbamoyl phosphate from bicarbonate: step 1/1. The protein operates within pyrimidine metabolism; UMP biosynthesis via de novo pathway; (S)-dihydroorotate from bicarbonate: step 1/3. Functionally, small subunit of the glutamine-dependent carbamoyl phosphate synthetase (CPSase). CPSase catalyzes the formation of carbamoyl phosphate from the ammonia moiety of glutamine, carbonate, and phosphate donated by ATP, constituting the first step of 2 biosynthetic pathways, one leading to arginine and/or urea and the other to pyrimidine nucleotides. The small subunit (glutamine amidotransferase) binds and cleaves glutamine to supply the large subunit with the substrate ammonia. The protein is Carbamoyl phosphate synthase small chain of Aquifex aeolicus (strain VF5).